The following is a 553-amino-acid chain: Cysteine desulfurase IscS (553 aa).

A compositionally biased stretch (low complexity) spans 102-122 (NNISSNNTQYNNNSSNSGSLN). The tract at residues 102–125 (NNISSNNTQYNNNSSNSGSLNDEG) is disordered.

The protein belongs to the class-V pyridoxal-phosphate-dependent aminotransferase family. NifS/IscS subfamily. As to quaternary structure, homotetramer. Interacts with Isd11; the interaction enhances cysteine desulfurase activity of IscS. Interacts with IscU. Component of a complex, at least composed of IscS, Isd11 and IscU. The cofactor is pyridoxal 5'-phosphate.

The protein resides in the mitochondrion. The enzyme catalyses (sulfur carrier)-H + L-cysteine = (sulfur carrier)-SH + L-alanine. It participates in cofactor biosynthesis; iron-sulfur cluster biosynthesis. Functionally, catalyzes sulfur activation and mobilization in iron-sulfur cluster formation (ISC) pathway for iron-sulfur (Fe-S) cluster biogenesis. Active when in complex with a partner protein Isd11. This chain is Cysteine desulfurase IscS, found in Plasmodium falciparum (isolate 3D7).